The sequence spans 118 residues: Protein TusC (118 aa).

The protein belongs to the DsrF/TusC family. In terms of assembly, heterohexamer, formed by a dimer of trimers. The hexameric TusBCD complex contains 2 copies each of TusB, TusC and TusD. The TusBCD complex interacts with TusE.

Its subcellular location is the cytoplasm. Its function is as follows. Part of a sulfur-relay system required for 2-thiolation of 5-methylaminomethyl-2-thiouridine (mnm(5)s(2)U) at tRNA wobble positions. The chain is Protein TusC from Salmonella typhi.